A 366-amino-acid polypeptide reads, in one-letter code: Gelsolin-like protein 2 (366 aa).

Gelsolin-like repeat units lie at residues 55–139 (NFKV…DLFL), 177–252 (KHIV…HEFY), and 286–327 (KSTV…AQEK). The interval 100 to 116 (KSTQDEYCVAAYKTVEL) is actin binding. Positions 104-107 (DEYC) are actin-actin interfilament contact point.

This sequence belongs to the villin/gelsolin family. In terms of assembly, interacts with actin monomers and filaments. Expressed in circular and longitudinal muscle, pseudohearts, pharynx and gizzard. Not expressed in seminal vesicles.

It localises to the cytoplasm. Its subcellular location is the cytoskeleton. Its function is as follows. Calcium-regulated protein that binds to the plus (or barbed) ends of actin monomers or filaments, preventing monomer exchange (end-blocking or capping). Can promote the assembly of monomers into filaments (nucleation) as well as sever existing filaments. This chain is Gelsolin-like protein 2, found in Lumbricus terrestris (Common earthworm).